The following is a 423-amino-acid chain: MDIDQYMTDLGRRARQASRAMARASTAAKNAALAAVAEAIERDAASLKEANARDVAKAREKGHDAAFIDRLTLSDKALKTMVEGLRQVAALADPIGEISNLKYRPSGIQVGQMRVPLGVIGIIYESRPNVTIDAAALCLKSGNATILRGGSEALECNTALAKLIGEGLEAAGLPQDAVQVVATSDRAAVGKLITMTEYVDVIVPRGGKSLIERLMNEARVPMIKHLDGICHVYVDDRADLTKALTVCDNAKTHRYGTCNTMETLLVARGIAAEVLPPLGKLYRDKQVELRVDAAARAVLADAGVGPLGDATEEDWRTEYLAPVLAIKVVDDLDAAIEHINEYSSQHTDAIVTEDHDRAMRFLREVDSASVMVNASTRFADGFEFGLGAEIGISNDKLHARGPVGLEGLTSLKYVVLGHGEGRQ.

The protein belongs to the gamma-glutamyl phosphate reductase family.

It localises to the cytoplasm. The enzyme catalyses L-glutamate 5-semialdehyde + phosphate + NADP(+) = L-glutamyl 5-phosphate + NADPH + H(+). Its pathway is amino-acid biosynthesis; L-proline biosynthesis; L-glutamate 5-semialdehyde from L-glutamate: step 2/2. In terms of biological role, catalyzes the NADPH-dependent reduction of L-glutamate 5-phosphate into L-glutamate 5-semialdehyde and phosphate. The product spontaneously undergoes cyclization to form 1-pyrroline-5-carboxylate. The sequence is that of Gamma-glutamyl phosphate reductase from Paraburkholderia xenovorans (strain LB400).